Reading from the N-terminus, the 681-residue chain is Peroxisomal acyl-coenzyme A oxidase 2 (681 aa).

Ser3 and Ser9 each carry phosphoserine. Lys66, Lys137, Lys303, Lys453, Lys561, and Lys667 each carry N6-succinyllysine. The short motif at 679 to 681 (HKM) is the Microbody targeting signal element.

It belongs to the acyl-CoA oxidase family. As to quaternary structure, homodimer. FAD is required as a cofactor. Most abundant in liver. Also expressed in kidney. Not present in any other tissues tested.

The protein resides in the peroxisome. It catalyses the reaction (25R)-3alpha,7alpha,12alpha-trihydroxy-5beta-cholestan-26-oyl-CoA + A + H2O = (24R,25R)-3alpha,7alpha,12alpha,24-tetrahydroxy-5beta-cholestan-26-oyl-CoA + AH2. The enzyme catalyses (25S)-3alpha,7alpha,12alpha-trihydroxy-5beta-cholestan-26-oyl-CoA + O2 = (24E)-3alpha,7alpha,12alpha-trihydroxy-5beta-cholest-24-en-26-oyl-CoA + H2O2. Its function is as follows. Oxidizes the CoA esters of the bile acid intermediates di- and tri-hydroxycoprostanic acids. Capable of oxidizing short as well as long chain 2-methyl branched fatty acids. This chain is Peroxisomal acyl-coenzyme A oxidase 2, found in Rattus norvegicus (Rat).